Reading from the N-terminus, the 258-residue chain is UPF0246 protein YaaA (258 aa).

Belongs to the UPF0246 family.

The chain is UPF0246 protein YaaA from Escherichia coli (strain K12 / MC4100 / BW2952).